The primary structure comprises 472 residues: uncharacterized protein (472 aa).

6 helical membrane passes run I4–I24, A27–F47, A56–V76, I99–V119, L140–T160, and I176–L196. The segment at G209–A229 is disordered. Over residues A220–A229 the composition is skewed to low complexity. Helical transmembrane passes span A240–L260, A286–F306, I323–I343, T372–M392, and I448–L468.

Belongs to the CitM (TC 2.A.11) transporter family.

It localises to the cell membrane. This is an uncharacterized protein from Bacillus subtilis (strain 168).